Consider the following 412-residue polypeptide: Proteasome-activating nucleotidase (412 aa).

Residues 18–72 (YRYLVDRVAGMESQNQELKEQIRQLESDKRYIETQKIRYEREVRKLKSEIEHLKT) adopt a coiled-coil conformation. Residues 197–202 (GTGKTL) and H336 contribute to the ATP site. Positions 410 to 412 (MFA) are docks into pockets in the proteasome alpha-ring to cause gate opening.

This sequence belongs to the AAA ATPase family. As to quaternary structure, homohexamer. The hexameric complex has a two-ring architecture resembling a top hat that caps the 20S proteasome core at one or both ends. Upon ATP-binding, the C-terminus of PAN interacts with the alpha-rings of the proteasome core by binding to the intersubunit pockets.

It is found in the cytoplasm. Its function is as follows. ATPase which is responsible for recognizing, binding, unfolding and translocation of substrate proteins into the archaeal 20S proteasome core particle. Is essential for opening the gate of the 20S proteasome via an interaction with its C-terminus, thereby allowing substrate entry and access to the site of proteolysis. Thus, the C-termini of the proteasomal ATPase function like a 'key in a lock' to induce gate opening and therefore regulate proteolysis. Unfolding activity requires energy from ATP hydrolysis, whereas ATP binding alone promotes ATPase-20S proteasome association which triggers gate opening, and supports translocation of unfolded substrates. The protein is Proteasome-activating nucleotidase of Methanospirillum hungatei JF-1 (strain ATCC 27890 / DSM 864 / NBRC 100397 / JF-1).